The following is a 213-amino-acid chain: Glycerol-3-phosphate acyltransferase (213 aa).

Helical transmembrane passes span 2 to 22 (ITIV…GLWI), 52 to 74 (AGMA…PIIF), 81 to 100 (PLIF…FAGF), 112 to 132 (VIFG…FGAL), 143 to 163 (VTAS…GFIL), and 164 to 184 (SNYD…IIIR).

It belongs to the PlsY family. Probably interacts with PlsX.

Its subcellular location is the cell membrane. It catalyses the reaction an acyl phosphate + sn-glycerol 3-phosphate = a 1-acyl-sn-glycero-3-phosphate + phosphate. The protein operates within lipid metabolism; phospholipid metabolism. In terms of biological role, catalyzes the transfer of an acyl group from acyl-phosphate (acyl-PO(4)) to glycerol-3-phosphate (G3P) to form lysophosphatidic acid (LPA). This enzyme utilizes acyl-phosphate as fatty acyl donor, but not acyl-CoA or acyl-ACP. This chain is Glycerol-3-phosphate acyltransferase, found in Streptococcus pneumoniae (strain ATCC 700669 / Spain 23F-1).